Here is a 397-residue protein sequence, read N- to C-terminus: Phosphoglycerate kinase (397 aa).

Substrate is bound by residues 21-23, Arg-36, 59-62, Arg-118, and Arg-151; these read DFN and HCGR. Residues Lys-201, Glu-323, and 353-356 contribute to the ATP site; that span reads GGDT.

Belongs to the phosphoglycerate kinase family. Monomer.

Its subcellular location is the cytoplasm. It carries out the reaction (2R)-3-phosphoglycerate + ATP = (2R)-3-phospho-glyceroyl phosphate + ADP. The protein operates within carbohydrate degradation; glycolysis; pyruvate from D-glyceraldehyde 3-phosphate: step 2/5. The sequence is that of Phosphoglycerate kinase from Bartonella henselae (strain ATCC 49882 / DSM 28221 / CCUG 30454 / Houston 1) (Rochalimaea henselae).